Here is a 210-residue protein sequence, read N- to C-terminus: Probable GTP-binding protein EngB (210 aa).

The EngB-type G domain occupies 22-198; the sequence is FLPEYAFIGR…LTYIDEVNQE (177 aa). Residues 30 to 37, 57 to 61, 75 to 78, 142 to 145, and 177 to 179 each bind GTP; these read GRSNVGKS, GKTQL, DLPG, TKAD, and TSS. 2 residues coordinate Mg(2+): Ser-37 and Thr-59.

It belongs to the TRAFAC class TrmE-Era-EngA-EngB-Septin-like GTPase superfamily. EngB GTPase family. It depends on Mg(2+) as a cofactor.

Functionally, necessary for normal cell division and for the maintenance of normal septation. This Flavobacterium johnsoniae (strain ATCC 17061 / DSM 2064 / JCM 8514 / BCRC 14874 / CCUG 350202 / NBRC 14942 / NCIMB 11054 / UW101) (Cytophaga johnsonae) protein is Probable GTP-binding protein EngB.